The chain runs to 454 residues: MELRNKKLTHDEFMTERQQVLKTWETGKNVENFEDGVKYQQAIPEHKRFSLALLKADKEGKTLSQPRAGVALMDEHIELLKTLQEECDLLPSTIDAYTRLNRYEEAAVGIKKSIEAGTSKLNGLPVVNHGVAACRRLTETLQKPLQIRHGTPDARLLAKISMASGFTSYEGGGISYNIPYAKRVTLEKSIRDWQYCDRLMGMYEEHGIRINREPFGPLTGTLIPPFISHSIAIIEGLLALEQSVKSITVGYGQVGSLTQDVAAIQSLRELAHEYFQSYGYTDYELSTVFHQWMGGFPEDESKAFAIISWGAAVAGMSGATKVITKSPHEAWGIPTAAANIQGLKASRQMLNMVNEQKFPPCPAVELEIELIKSEVRAVLNKVFELGNGDIARGTVLAFEAGVLEAGAVPLPKDILDLHHDYVAERARCEGRQPTFQMVVDDINAVSHSKLIGRP.

Arginine 67 is a binding site for L-glutamate. Residue glycine 69 coordinates adenosylcob(III)alamin. Position 99 (arginine 99) interacts with L-glutamate. Asparagine 122 is an adenosylcob(III)alamin binding site. L-glutamate contacts are provided by residues 148 to 149, glutamate 170, and tyrosine 176; that span reads RH. Proline 179 lines the adenosylcob(III)alamin pocket. Tyrosine 180 serves as a coordination point for L-glutamate. Positions 296, 325, 329, and 333 each coordinate adenosylcob(III)alamin.

Belongs to the methylaspartate mutase GlmE subunit family. Heterotetramer composed of 2 epsilon subunits (GlmE) and 2 sigma subunits (GlmS). GlmE exists as a homodimer and GlmS as a monomer. Adenosylcob(III)alamin serves as cofactor.

It catalyses the reaction (2S,3S)-3-methyl-L-aspartate = L-glutamate. It participates in amino-acid degradation; L-glutamate degradation via mesaconate pathway; acetate and pyruvate from L-glutamate: step 1/4. Functionally, catalyzes the carbon skeleton rearrangement of L-glutamate to L-threo-3-methylaspartate ((2S,3S)-3-methylaspartate). This Shigella dysenteriae serotype 1 (strain Sd197) protein is Glutamate mutase epsilon subunit.